Here is a 210-residue protein sequence, read N- to C-terminus: Vacuolar protein sorting-associated protein 28 homolog (210 aa).

The 106-residue stretch at 1-106 (MSSQNANLMR…REGRPITVKD (106 aa)) folds into the VPS28 N-terminal domain. Residues 110-206 (NVLKHIASIV…AYQAFNKALN (97 aa)) enclose the VPS28 C-terminal domain.

Belongs to the VPS28 family. In terms of assembly, component of the ESCRT-I complex (endosomal sorting complex required for transport I). In terms of tissue distribution, expressed in embryos.

It localises to the endosome. In terms of biological role, component of the ESCRT-I complex, a regulator of vesicular trafficking process. The chain is Vacuolar protein sorting-associated protein 28 homolog (vps-28) from Caenorhabditis elegans.